A 318-amino-acid chain; its full sequence is Na(+)-translocating ferredoxin:NAD(+) oxidoreductase complex subunit D (318 aa).

The next 3 helical transmembrane spans lie at 35-55 (LAVA…ICVI), 77-99 (WSAV…WWIG), and 114-134 (FGGL…FLLA). Thr156 carries the post-translational modification FMN phosphoryl threonine. The next 3 helical transmembrane spans lie at 182–202 (VYGC…LYLI), 206–226 (IISW…ALLV), and 261–281 (IIYA…GGYP).

The protein belongs to the NqrB/RnfD family. The complex is composed of six subunits: RnfA, RnfB, RnfC, RnfD, RnfE and RnfG. The cofactor is FMN.

The protein resides in the cell membrane. It carries out the reaction 2 reduced [2Fe-2S]-[ferredoxin] + Na(+)(in) + NAD(+) + H(+) = 2 oxidized [2Fe-2S]-[ferredoxin] + Na(+)(out) + NADH. Part of a membrane-bound complex that couples electron transfer with translocation of ions across the membrane. Couples electron transfer from reduced ferredoxin to NAD(+) with electrogenic movement of Na(+) out of the cell. Involved in caffeate respiration. This Acetobacterium woodii (strain ATCC 29683 / DSM 1030 / JCM 2381 / KCTC 1655 / WB1) protein is Na(+)-translocating ferredoxin:NAD(+) oxidoreductase complex subunit D.